A 401-amino-acid polypeptide reads, in one-letter code: Type I restriction enzyme EcoprrI specificity subunit (401 aa).

Belongs to the type-I restriction system S methylase family. The type I restriction/modification system is composed of three polypeptides R, M and S; the restriction enzyme has stoichiometry R(2)M(2)S(1) while the methyltransferase is M(2)S(1).

In terms of biological role, the specificity (S) subunit of a type I restriction enzyme; this subunit dictates DNA sequence specificity. The M and S subunits together form a methyltransferase (MTase) that methylates two adenine residues of the sequence 5'-CCAN(7)ATGC-3'. In the presence of the R subunit the complex can also act as an endonuclease, binding to the same target sequence but cutting the DNA some distance from this site. Whether the DNA is cut or modified depends on the methylation state of the target sequence. When the target site is unmodified, the DNA is cut. When the target site is hemimethylated, the complex acts as a maintenance MTase modifying the DNA so that both strands become methylated. After locating a non-methylated recognition site, the enzyme complex serves as a molecular motor that translocates DNA in an ATP-dependent manner until a collision occurs that triggers cleavage. This chain is Type I restriction enzyme EcoprrI specificity subunit (prrB), found in Escherichia coli.